Here is a 1026-residue protein sequence, read N- to C-terminus: DNA cross-link repair 1A protein (1026 aa).

The tract at residues 1-189 (MLEDTWEEEI…RDSKEPLGSP (189 aa)) is nuclear localization region. Positions 12–110 (EYKSKRKPKP…HRTRRGKQVT (99 aa)) are disordered. Residues 34 to 65 (SVEKSTDGKHQSKGNEKRTSENPGKTKDHKVC) are compositionally biased toward basic and acidic residues. A compositionally biased stretch (low complexity) spans 71-82 (SQISAGSSQSSS). The span at 98 to 107 (KKQHRTRRGK) shows a compositional bias: basic residues. The UBZ4-type zinc finger occupies 118 to 148 (DGYCPSCQMPFSSLLGQTPQWHVFECLDSPP). 4 residues coordinate Zn(2+): Cys121, Cys124, His139, and Cys143. Glycyl lysine isopeptide (Lys-Gly) (interchain with G-Cter in SUMO2) cross-links involve residues Lys359, Lys434, and Lys522. A nuclear focus formation region spans residues 401–602 (SQEDLPHTDA…SSLSDLEFDA (202 aa)). 3 disordered regions span residues 474-542 (PLEK…SKKV), 560-590 (ETSL…CKRK), and 602-651 (AKNL…PELG). A compositionally biased stretch (low complexity) spans 527–540 (SPSSPKCSPSQPSK). A compositionally biased stretch (polar residues) spans 569–581 (EGPNVSPVVSPNQ). A phosphoserine mark is found at Ser574 and Ser578. Residues 619-628 (RQHRRKRHKT) are compositionally biased toward basic residues. Residue Lys657 forms a Glycyl lysine isopeptide (Lys-Gly) (interchain with G-Cter in SUMO2) linkage.

The protein belongs to the DNA repair metallo-beta-lactamase (DRMBL) family. Binds constitutively to TP53BP1. Binds CDC27, which is itself a component of the anaphase promoting complex (APC). Binds PIAS1.

Its subcellular location is the nucleus. It catalyses the reaction a beta-lactam + H2O = a substituted beta-amino acid. In terms of biological role, may be required for DNA interstrand cross-link repair. Also required for checkpoint mediated cell cycle arrest in early prophase in response to mitotic spindle poisons. The sequence is that of DNA cross-link repair 1A protein (Dclre1a) from Mus musculus (Mouse).